We begin with the raw amino-acid sequence, 234 residues long: BTB/POZ domain-containing protein KCTD5 (234 aa).

Ala-2 is subject to N-acetylalanine. Residues 44-146 (KWVRLNVGGT…LVKDKIRERD (103 aa)) form the BTB domain. A disordered region spans residues 213–234 (PYGTTSEPSEKAKILQERGSRM). Basic and acidic residues predominate over residues 220–234 (PSEKAKILQERGSRM).

In terms of assembly, homopentamer. Interacts (via C-terminus) with GRASP55/GORASP2. Interacts with CUL3 and with ubiquitinated proteins. Interacts with CRY1.

Its subcellular location is the cytoplasm. The protein resides in the cytosol. The protein localises to the nucleus. Its interaction with CUL3 suggests that it may act as a substrate adapter in some E3 ligase complex. Does not affect the function of Kv channel Kv2.1/KCNB1, Kv1.2/KCNA2, Kv4.2/KCND2 and Kv3.4/KCNC4. This Mus musculus (Mouse) protein is BTB/POZ domain-containing protein KCTD5 (Kctd5).